A 312-amino-acid polypeptide reads, in one-letter code: tRNA dimethylallyltransferase (312 aa).

11-18 (GATATGKT) contributes to the ATP binding site. Residue 13–18 (TATGKT) participates in substrate binding. Residues 36-39 (DSRQ) form an interaction with substrate tRNA region.

The protein belongs to the IPP transferase family. In terms of assembly, monomer. Mg(2+) serves as cofactor.

It catalyses the reaction adenosine(37) in tRNA + dimethylallyl diphosphate = N(6)-dimethylallyladenosine(37) in tRNA + diphosphate. Its function is as follows. Catalyzes the transfer of a dimethylallyl group onto the adenine at position 37 in tRNAs that read codons beginning with uridine, leading to the formation of N6-(dimethylallyl)adenosine (i(6)A). The sequence is that of tRNA dimethylallyltransferase from Thermosynechococcus vestitus (strain NIES-2133 / IAM M-273 / BP-1).